Reading from the N-terminus, the 713-residue chain is Probable 1-deoxy-D-xylulose-5-phosphate synthase 2, chloroplastic (713 aa).

Residues 1-30 (MALQASSSPSMFRAIPTNTNASCRRKLQVR) constitute a chloroplast transit peptide. Thiamine diphosphate is bound by residues His-140 and 181-183 (GHS). Asp-212 contributes to the Mg(2+) binding site. Residues 213–214 (GA), Asn-241, Tyr-362, and Glu-444 contribute to the thiamine diphosphate site. Asn-241 contributes to the Mg(2+) binding site.

This sequence belongs to the transketolase family. DXPS subfamily. In terms of assembly, homodimer. Requires Mg(2+) as cofactor. Thiamine diphosphate serves as cofactor.

It is found in the plastid. It localises to the chloroplast. The enzyme catalyses D-glyceraldehyde 3-phosphate + pyruvate + H(+) = 1-deoxy-D-xylulose 5-phosphate + CO2. It functions in the pathway metabolic intermediate biosynthesis; 1-deoxy-D-xylulose 5-phosphate biosynthesis; 1-deoxy-D-xylulose 5-phosphate from D-glyceraldehyde 3-phosphate and pyruvate: step 1/1. Its function is as follows. Catalyzes the acyloin condensation reaction between C atoms 2 and 3 of pyruvate and glyceraldehyde 3-phosphate to yield 1-deoxy-D-xylulose-5-phosphate (DXP). Is a limiting enzyme for plastidic isoprenoid biosynthesis and essential for chloroplast development. In Oryza sativa subsp. japonica (Rice), this protein is Probable 1-deoxy-D-xylulose-5-phosphate synthase 2, chloroplastic.